The primary structure comprises 469 residues: UDP-N-acetylmuramate--L-alanine ligase (469 aa).

ATP is bound at residue 113–119; the sequence is GTHGKTT.

This sequence belongs to the MurCDEF family.

The protein localises to the cytoplasm. The enzyme catalyses UDP-N-acetyl-alpha-D-muramate + L-alanine + ATP = UDP-N-acetyl-alpha-D-muramoyl-L-alanine + ADP + phosphate + H(+). It functions in the pathway cell wall biogenesis; peptidoglycan biosynthesis. Its function is as follows. Cell wall formation. The protein is UDP-N-acetylmuramate--L-alanine ligase of Neisseria meningitidis serogroup C / serotype 2a (strain ATCC 700532 / DSM 15464 / FAM18).